The sequence spans 870 residues: Importin subunit beta-1 (870 aa).

Ala-2 carries the N-acetylalanine modification. 18 HEAT repeats span residues 4–33, 35–67, 87–126, 132–161, 172–204, 214–249, 255–304, 313–361, 365–395, 403–440, 456–492, 498–535, 542–588, 596–637, 642–679, 684–722, 730–776, and 826–868; these read EVTQ…FQEQ, LAGF…KNAL, MSTK…ELPQ, LIVS…LCEE, VNKI…YMAL, DMER…IAST, AHYM…EFAG, FTKQ…RAVG, VPHV…GSIL, LMAI…IFEF, CQQI…EDIG, TPFF…EVVR, STMV…QVII, TKSK…AYAA, AKYM…CRAL, LPYC…ALAI, WRYS…FQGF, and SHVG…TRAI. In terms of domain architecture, Importin N-terminal spans 23–103; that stretch reads AEESLKQFQE…RAFLLKTLSA (81 aa).

It belongs to the importin beta family. Importin beta-1 subfamily. In terms of assembly, forms a complex with the importin subunits alpha IMPA1 or IMPA2, the nucleoporin NUP62 and the Ran-GTP-binding proteins RAN1, RAN2 or RAN3. Expressed in roots, cotyledons, leaves, stems, petals, stamen, stigma, siliques, embryos and guard cells.

It is found in the cytoplasm. It localises to the nucleus. Acts as a negative effector of drought tolerance. Involved in the regulation of stomatal closure and in the abscisic acid (ABA)-mediated pathway that lead to drought tolerance. Does not directly mediate nuclear import of ABI1 and ABI2 which are key regulators of the ABA signaling pathway. May be involved in nuclear translocation of other type 2C protein phosphatases that mediate ABA signaling. This chain is Importin subunit beta-1, found in Arabidopsis thaliana (Mouse-ear cress).